We begin with the raw amino-acid sequence, 395 residues long: Cation channel sperm-associated protein 3 (395 aa).

Residues 1–48 (MSQHFHHNPVRVKSGSLFATASEALQARLSKIKRKDKECQAYFRKVIK) lie on the Cytoplasmic side of the membrane. Residues 49–71 (STFFQIVMITTVTTNSFLLVLGT) form a helical membrane-spanning segment. The Extracellular segment spans residues 72 to 80 (NYDIQFEFF). The helical transmembrane segment at 81–107 (RTFEVSELFFVSVYVCEFLMKVYVDPI) threads the bilayer. Residue threonine 108 is a topological domain, cytoplasmic. A helical membrane pass occupies residues 109–131 (YWKDGYNILDVIILIILTIPYLL). Residues 132–143 (RKIKGNHSAYLH) are Extracellular-facing. Residues 144-160 (FADGIQSLRILKLISYS) form a helical membrane-spanning segment. The Cytoplasmic portion of the chain corresponds to 161–168 (RGIRTLII). Residues 169-195 (AVGETVYTVASVLTLLFLLMFVFAILG) traverse the membrane as a helical segment. The Extracellular portion of the chain corresponds to 196–216 (FCLFGVTDRGDLENWGNLASA). Residues 217-236 (FFTLFSLATVDGWTDLQEEL) constitute an intramembrane region (helical; Pore-forming). Residues 237–242 (DKRKFT) are Extracellular-facing. Residues 243–268 (VSRAFTILFILLASFIFLNMFVGVMI) traverse the membrane as a helical segment. Topologically, residues 269-395 (MHTEDSMKKF…ESSSSLSGLS (127 aa)) are cytoplasmic.

The protein belongs to the cation channel sperm-associated (TC 1.A.1.19) family. In terms of assembly, component of the CatSper complex or CatSpermasome composed of the core pore-forming members CATSPER1, CATSPER2, CATSPER3 and CATSPER4 as well as auxiliary members CATSPERB, CATSPERG2, CATSPERD, CATSPERE, CATSPERZ, C2CD6/CATSPERT, SLCO6C1, TMEM249, TMEM262 and EFCAB9. HSPA1 may be an additional auxiliary complex member. The core complex members CATSPER1, CATSPER2, CATSPER3 and CATSPER4 form a heterotetrameric channel. The auxiliary CATSPERB, CATSPERG2, CATSPERD and CATSPERE subunits form a pavilion-like structure over the pore which stabilizes the complex through interactions with CATSPER4, CATSPER3, CATSPER1 and CATSPER2 respectively. SLCO6C1 interacts with CATSPERE and TMEM262/CATSPERH interacts with CATSPERB, further stabilizing the complex. C2CD6/CATSPERT interacts at least with CATSPERD and is required for targeting the CatSper complex in the flagellar membrane. In terms of tissue distribution, testis-specific.

Its subcellular location is the cell projection. It localises to the cilium. The protein localises to the flagellum membrane. The enzyme catalyses Ca(2+)(in) = Ca(2+)(out). With respect to regulation, in contrast to the human ortholog, not activated by progesterone. Activated by intracellular alkalinization. Its function is as follows. Pore-forming subunit of the CatSper complex, a sperm-specific voltage-gated calcium channel that plays a central role in sperm cell hyperactivation. Controls calcium entry to mediate the hyperactivated motility, a step needed for sperm motility which is essential late in the preparation of sperm for fertilization. This chain is Cation channel sperm-associated protein 3 (Catsper3), found in Mus musculus (Mouse).